A 270-amino-acid chain; its full sequence is A-type potassium channel modulatory protein KCNIP2 (270 aa).

Positions Met-1 to Asp-17 are enriched in basic and acidic residues. Residues Met-1 to Ala-34 form a disordered region. Ser-9 is subject to Phosphoserine. S-palmitoyl cysteine attachment occurs at residues Cys-45 and Cys-46. Residues Phe-81–Pro-137 enclose the EF-hand 1; degenerate domain. EF-hand domains follow at residues Asp-140–Gly-175, Thr-176–Met-211, and Ala-224–Ile-259. 14 residues coordinate Ca(2+): Asp-153, Asn-155, Asp-157, Ser-159, Asp-164, Asp-189, Asn-191, Asp-193, Cys-195, Glu-200, Asp-237, Asn-239, Asp-241, and Glu-248. The segment at Glu-257–Ile-270 is interaction with KCND2.

This sequence belongs to the recoverin family. In terms of assembly, component of heteromultimeric potassium channels. Identified in potassium channel complexes containing KCND1, KCND2, KCND3, KCNIP1, KCNIP2, KCNIP3, KCNIP4, DPP6 and DPP10. The KCND2-KCNIP2 channel complex contains four KCND2 and four KCNIP2 subunits. Interacts with KCND2. Probably part of a complex consisting of KCNIP1, KCNIP2 isoform 3 and KCND2. At least isoform 2 and isoform 3 can self-associate to form homodimers and homotetramers. Isoform 3 interacts with KCNIP1 in a calcium-dependent manner. Interacts with KCND3; each KCNIP2 monomer interacts with two adjacent KCND3 subunits, through both the N-terminal inactivation ball of a KCND3 subunit and a C-terminal helix from the adjacent KCND3 subunit, clamping them together; this interaction modulates the channel gating kinetics. Post-translationally, palmitoylated. Palmitoylation enhances association with the plasma membrane. In terms of tissue distribution, expressed in heart, brain and lung. In brain, abundantly expressed in striatum, hippocampus and olfactory bulb, moderately expressed in cerebral cortex and lowly expressed in thalamus and hypothalamus. Isoform 1 is predominant in cerebral cortex, striatum and hippocampus. Isoform 1, isoform 2 and isoform 3 are equally expressed in olfactory bulb. Iisoform 3 is expressed at high levels and isoform 1 at low levels in heart (in PubMed:11263977).

The protein localises to the cell membrane. Regulatory subunit of Kv4/D (Shal)-type voltage-gated rapidly inactivating A-type potassium channels. Modulates channel density, inactivation kinetics and rate of recovery from inactivation in a calcium-dependent and isoform-specific manner. Involved in KCND2 and KCND3 trafficking to the cell surface. Essential for the expression of I(To) currents in the heart. Required for normal protein levels of KCND2 in the heart ventricle. This Rattus norvegicus (Rat) protein is A-type potassium channel modulatory protein KCNIP2.